The primary structure comprises 278 residues: Ferredoxin--NADP reductase A (278 aa).

Positions 3 to 103 constitute an FAD-binding FR-type domain; that stretch reads PGYTEETVLE…KRATGTLTIG (101 aa). FAD-binding positions include 52–55 and Thr118; that span reads RAYS.

Belongs to the ferredoxin--NADP reductase type 1 family. The cofactor is FAD.

It carries out the reaction 2 reduced [4Fe-4S]-[ferredoxin] + NADP(+) + H(+) = 2 oxidized [4Fe-4S]-[ferredoxin] + NADPH. In terms of biological role, transports electrons between NADPH and ferredoxin. Can transfer electrons to ferredoxins Fdx2 and Fdx8. Prefers NADPH to NADH. The polypeptide is Ferredoxin--NADP reductase A (Sorangium cellulosum (strain So ce56) (Polyangium cellulosum (strain So ce56))).